We begin with the raw amino-acid sequence, 239 residues long: 2,3,4,5-tetrahydropyridine-2,6-dicarboxylate N-acetyltransferase (239 aa).

Belongs to the transferase hexapeptide repeat family. DapH subfamily.

It carries out the reaction (S)-2,3,4,5-tetrahydrodipicolinate + acetyl-CoA + H2O = L-2-acetamido-6-oxoheptanedioate + CoA. It participates in amino-acid biosynthesis; L-lysine biosynthesis via DAP pathway; LL-2,6-diaminopimelate from (S)-tetrahydrodipicolinate (acetylase route): step 1/3. Catalyzes the transfer of an acetyl group from acetyl-CoA to tetrahydrodipicolinate. The sequence is that of 2,3,4,5-tetrahydropyridine-2,6-dicarboxylate N-acetyltransferase from Staphylococcus carnosus (strain TM300).